We begin with the raw amino-acid sequence, 166 residues long: Photosystem I assembly protein Ycf3 (166 aa).

3 TPR repeats span residues 31–64 (AFKY…EEDP), 68–101 (SYIL…NPNL), and 116–149 (GEQA…APNN).

The protein belongs to the Ycf3 family.

Its subcellular location is the cellular thylakoid membrane. Essential for the assembly of the photosystem I (PSI) complex. May act as a chaperone-like factor to guide the assembly of the PSI subunits. This chain is Photosystem I assembly protein Ycf3, found in Acaryochloris marina (strain MBIC 11017).